Consider the following 457-residue polypeptide: Proline-specific permease ProY (457 aa).

Topologically, residues 1-17 (MESKNKLKRGLSTRHIR) are cytoplasmic. 2 consecutive transmembrane segments (helical) span residues 18-38 (FMAL…DAIK) and 39-59 (MAGP…YIIM). At 60-84 (RALGEMSVHNPAASSFSRYAQENLG) the chain is on the cytoplasmic side. Residues 85 to 105 (PLAGYITGWTYCFEILIVAIA) traverse the membrane as a helical segment. The Periplasmic portion of the chain corresponds to 106–113 (DVTAFGIY). The chain crosses the membrane as a helical span at residues 114–134 (MGVWFPTVPHWIWVLSVVLII). The Cytoplasmic portion of the chain corresponds to 135–156 (CAVNLMSVKVFGELEFWFSFFK). A helical transmembrane segment spans residues 157–177 (VATIIIMIVAGFGIIIWGIGN). At 178-197 (GGQPTGIHNLWSNGGFFSNG) the chain is on the periplasmic side. The chain crosses the membrane as a helical span at residues 198 to 218 (WLGMVMSLQMVMFAYGGIEII). The Cytoplasmic portion of the chain corresponds to 219 to 242 (GITAGEAKDPEKSIPRAINSVPMR). The helical transmembrane segment at 243-263 (ILVFYVGTLFVIMSIYPWNQV) threads the bilayer. The Periplasmic segment spans residues 264-277 (GTAGSPFVLTFQHM). Residues 278–298 (GITFAASILNFVVLTASLSAI) traverse the membrane as a helical segment. The Cytoplasmic segment spans residues 299-331 (NSDVFGVGRMLHGMAEQGSAPKIFSKTSRRGIP). The helical transmembrane segment at 332–352 (WVTVLVMTTALLFAVYLNYIM) threads the bilayer. At 353 to 355 (PEN) the chain is on the periplasmic side. A helical membrane pass occupies residues 356–376 (VFLVIASLATFATVWVWIMIL). Over 377–399 (LSQIAFRRRLPPEEVKALKFKVP) the chain is Cytoplasmic. The helical transmembrane segment at 400–420 (GGVATTIGGLIFLLFIIGLIG) threads the bilayer. Over 421–424 (YHPD) the chain is Periplasmic. A helical transmembrane segment spans residues 425–445 (TRISLYVGFAWIVVLLIGWMF). Topologically, residues 446-457 (KRRHDRQLAENQ) are cytoplasmic.

It belongs to the amino acid-polyamine-organocation (APC) superfamily. Amino acid transporter (AAT) (TC 2.A.3.1) family.

It localises to the cell inner membrane. In terms of biological role, permease that is involved in the transport across the cytoplasmic membrane of proline. This is Proline-specific permease ProY (proY) from Escherichia coli O157:H7.